The sequence spans 238 residues: Pyridoxine 5'-phosphate synthase (238 aa).

3-amino-2-oxopropyl phosphate is bound by residues asparagine 7 and arginine 18. The Proton acceptor role is filled by histidine 43. 2 residues coordinate 1-deoxy-D-xylulose 5-phosphate: arginine 45 and histidine 50. Glutamate 70 acts as the Proton acceptor in catalysis. Threonine 100 lines the 1-deoxy-D-xylulose 5-phosphate pocket. The active-site Proton donor is histidine 190. 3-amino-2-oxopropyl phosphate-binding positions include aspartate 191 and 213-214 (GH).

Belongs to the PNP synthase family. In terms of assembly, homooctamer; tetramer of dimers.

It is found in the cytoplasm. The enzyme catalyses 3-amino-2-oxopropyl phosphate + 1-deoxy-D-xylulose 5-phosphate = pyridoxine 5'-phosphate + phosphate + 2 H2O + H(+). It participates in cofactor biosynthesis; pyridoxine 5'-phosphate biosynthesis; pyridoxine 5'-phosphate from D-erythrose 4-phosphate: step 5/5. Its function is as follows. Catalyzes the complicated ring closure reaction between the two acyclic compounds 1-deoxy-D-xylulose-5-phosphate (DXP) and 3-amino-2-oxopropyl phosphate (1-amino-acetone-3-phosphate or AAP) to form pyridoxine 5'-phosphate (PNP) and inorganic phosphate. The protein is Pyridoxine 5'-phosphate synthase of Phocaeicola vulgatus (strain ATCC 8482 / DSM 1447 / JCM 5826 / CCUG 4940 / NBRC 14291 / NCTC 11154) (Bacteroides vulgatus).